A 280-amino-acid chain; its full sequence is Cytochrome bc1 complex cytochrome c subunit (280 aa).

A helical transmembrane segment spans residues L25–L45. Cytochrome c domains lie at A60 to G140 and N161 to T239. C73, C76, H77, C174, C177, and H178 together coordinate heme c. A helical transmembrane segment spans residues G258–A278.

As to quaternary structure, the cytochrome bc1 complex is composed of a cytochrome b (QcrB), the Rieske iron-sulfur protein (QcrA) and a diheme cytochrome c (QcrC) subunit. Post-translationally, binds 2 heme c groups covalently per subunit.

It is found in the cell membrane. It catalyses the reaction a quinol + 2 Fe(III)-[cytochrome c](out) = a quinone + 2 Fe(II)-[cytochrome c](out) + 2 H(+)(out). In terms of biological role, cytochrome b subunit of the cytochrome bc1 complex, an essential component of the respiratory electron transport chain required for ATP synthesis. The bc1 complex catalyzes the oxidation of ubiquinol and the reduction of cytochrome c in the respiratory chain. The bc1 complex operates through a Q-cycle mechanism that couples electron transfer to generation of the proton gradient that drives ATP synthesis. The sequence is that of Cytochrome bc1 complex cytochrome c subunit (qcrC) from Mycobacterium bovis (strain ATCC BAA-935 / AF2122/97).